Reading from the N-terminus, the 340-residue chain is Phosphate acyltransferase (340 aa).

The protein belongs to the PlsX family. In terms of assembly, homodimer. Probably interacts with PlsY.

Its subcellular location is the cytoplasm. It carries out the reaction a fatty acyl-[ACP] + phosphate = an acyl phosphate + holo-[ACP]. Its pathway is lipid metabolism; phospholipid metabolism. Functionally, catalyzes the reversible formation of acyl-phosphate (acyl-PO(4)) from acyl-[acyl-carrier-protein] (acyl-ACP). This enzyme utilizes acyl-ACP as fatty acyl donor, but not acyl-CoA. The polypeptide is Phosphate acyltransferase (Helicobacter pylori (strain HPAG1)).